A 393-amino-acid chain; its full sequence is NAD(P)H-quinone oxidoreductase subunit H, chloroplastic (393 aa).

It belongs to the complex I 49 kDa subunit family. In terms of assembly, NDH is composed of at least 16 different subunits, 5 of which are encoded in the nucleus.

The protein resides in the plastid. It localises to the chloroplast thylakoid membrane. It carries out the reaction a plastoquinone + NADH + (n+1) H(+)(in) = a plastoquinol + NAD(+) + n H(+)(out). The enzyme catalyses a plastoquinone + NADPH + (n+1) H(+)(in) = a plastoquinol + NADP(+) + n H(+)(out). Its function is as follows. NDH shuttles electrons from NAD(P)H:plastoquinone, via FMN and iron-sulfur (Fe-S) centers, to quinones in the photosynthetic chain and possibly in a chloroplast respiratory chain. The immediate electron acceptor for the enzyme in this species is believed to be plastoquinone. Couples the redox reaction to proton translocation, and thus conserves the redox energy in a proton gradient. This Agrostis stolonifera (Creeping bentgrass) protein is NAD(P)H-quinone oxidoreductase subunit H, chloroplastic.